We begin with the raw amino-acid sequence, 323 residues long: Ankyrin repeat and SOCS box protein 11 (323 aa).

7 ANK repeats span residues 64-93 (ADRS…NVNL), 97-126 (NRVS…HVNA), 130-159 (HGAT…KAQL), 162-191 (YLAS…NIEQ), 195-224 (QLGT…SVDH), 227-256 (WLDT…NLNL), and 260-289 (QGKS…ALSQ). In terms of domain architecture, SOCS box spans 273-323 (SVRQALLLHEGPPALSQLCRLCVRKCLGRTCHHAIYALGLPESLEKFLLYQ).

This sequence belongs to the ankyrin SOCS box (ASB) family. In terms of assembly, substrate-recognition component of the ECS(ASB11) complex, composed of ASB11, CUL5, ELOB, ELOC and RNF7/RBX2.

It is found in the endoplasmic reticulum. It participates in protein modification; protein ubiquitination. In terms of biological role, substrate-recognition component of a cullin-5-RING E3 ubiquitin-protein ligase complex (ECS complex, also named CRL5 complex), which mediates the ubiquitination and subsequent proteasomal degradation of target proteins, such as BIK, DIRAS2 and RPN1. The ECS(ASB11) complex acts as a regulator of the endoplasmic reticulum unfolded protein response by mediating ubiquitination and degradation of BIK. The protein is Ankyrin repeat and SOCS box protein 11 (Asb11) of Mus musculus (Mouse).